Here is a 661-residue protein sequence, read N- to C-terminus: Acetyl-coenzyme A synthetase (661 aa).

Residues 197–200 (RGGK) and Thr320 contribute to the CoA site. Residues 396–398 (GEP), 420–425 (DTWWQT), Asp511, and Arg526 each bind ATP. Ser534 contributes to the CoA binding site. Position 537 (Arg537) interacts with ATP. 2 residues coordinate Mg(2+): Val548 and Val553. Residue Lys620 is modified to N6-acetyllysine.

Belongs to the ATP-dependent AMP-binding enzyme family. The cofactor is Mg(2+). Post-translationally, acetylated. Deacetylation by the SIR2-homolog deacetylase activates the enzyme.

It carries out the reaction acetate + ATP + CoA = acetyl-CoA + AMP + diphosphate. In terms of biological role, catalyzes the conversion of acetate into acetyl-CoA (AcCoA), an essential intermediate at the junction of anabolic and catabolic pathways. AcsA undergoes a two-step reaction. In the first half reaction, AcsA combines acetate with ATP to form acetyl-adenylate (AcAMP) intermediate. In the second half reaction, it can then transfer the acetyl group from AcAMP to the sulfhydryl group of CoA, forming the product AcCoA. The polypeptide is Acetyl-coenzyme A synthetase (Leptospira interrogans serogroup Icterohaemorrhagiae serovar Lai (strain 56601)).